Consider the following 209-residue polypeptide: NAD(P)H dehydrogenase (quinone) (209 aa).

A Flavodoxin-like domain is found at 4 to 199; it reads VNIIFYSMYG…AMARYQGRHV (196 aa). Residues 10–15 and 87–89 each bind FMN; these read SMYGHV and TRY. Tyrosine 12 lines the NAD(+) pocket. Tryptophan 107 lines the substrate pocket. FMN is bound by residues 122–128 and histidine 143; that span reads SSGTQHG.

Belongs to the WrbA family. FMN is required as a cofactor.

The catalysed reaction is a quinone + NADH + H(+) = a quinol + NAD(+). It carries out the reaction a quinone + NADPH + H(+) = a quinol + NADP(+). This Methanosarcina acetivorans (strain ATCC 35395 / DSM 2834 / JCM 12185 / C2A) protein is NAD(P)H dehydrogenase (quinone).